The chain runs to 219 residues: Histone H1.4 (219 aa).

A compositionally biased stretch (low complexity) spans methionine 1–alanine 15. A disordered region spans residues methionine 1–serine 41. An N-acetylserine modification is found at serine 2. Serine 2 carries the post-translational modification Phosphoserine. Lysine 17 is modified (N6-acetyllysine). Threonine 18 is modified (phosphothreonine). Basic residues predominate over residues valine 20 to alanine 35. Lysine 26 carries the post-translational modification N6-acetyllysine; alternate. Residue lysine 26 is modified to N6-methyllysine; alternate. Lysine 34 carries the post-translational modification N6-(beta-hydroxybutyryl)lysine; alternate. N6-succinyllysine; alternate is present on lysine 34. The residue at position 36 (serine 36) is a Phosphoserine. In terms of domain architecture, H15 spans serine 36–lysine 109. Residue lysine 52 is modified to N6-(beta-hydroxybutyryl)lysine. A Citrulline modification is found at arginine 54. N6-(beta-hydroxybutyryl)lysine is present on residues lysine 64, lysine 85, lysine 90, and lysine 106. The disordered stretch occupies residues threonine 92 to lysine 219. Positions lysine 119–lysine 140 are enriched in basic residues. Phosphothreonine is present on threonine 146. Basic residues-rich tracts occupy residues lysine 149–lysine 160 and lysine 168–proline 185. Serine 150 is subject to ADP-ribosylserine. Serine 187 is subject to Phosphoserine. Over residues lysine 192–lysine 219 the composition is skewed to basic residues.

Belongs to the histone H1/H5 family. H1 histones are progressively phosphorylated during the cell cycle, becoming maximally phosphorylated during late G2 phase and M phase, and being dephosphorylated sharply thereafter. In terms of processing, acetylated at Lys-26. Deacetylated at Lys-26 by SIRT1. Post-translationally, citrullination at Arg-54 (H1R54ci) by PADI4 takes place within the DNA-binding site of H1 and results in its displacement from chromatin and global chromatin decondensation, thereby promoting pluripotency and stem cell maintenance. ADP-ribosylated on Ser-150 in response to DNA damage.

The protein localises to the nucleus. Its subcellular location is the chromosome. Functionally, histone H1 protein binds to linker DNA between nucleosomes forming the macromolecular structure known as the chromatin fiber. Histones H1 are necessary for the condensation of nucleosome chains into higher-order structured fibers. Also acts as a regulator of individual gene transcription through chromatin remodeling, nucleosome spacing and DNA methylation. The protein is Histone H1.4 of Homo sapiens (Human).